We begin with the raw amino-acid sequence, 135 residues long: Flagellar assembly factor FliW 1 (135 aa).

It belongs to the FliW family. Interacts with translational regulator CsrA and flagellin(s).

The protein localises to the cytoplasm. In terms of biological role, acts as an anti-CsrA protein, binds CsrA and prevents it from repressing translation of its target genes, one of which is flagellin. Binds to flagellin and participates in the assembly of the flagellum. In Helicobacter pylori (strain ATCC 700392 / 26695) (Campylobacter pylori), this protein is Flagellar assembly factor FliW 1.